The chain runs to 532 residues: CTP synthase (532 aa).

Residues Met-1–Leu-267 form an amidoligase domain region. Ser-13 contributes to the CTP binding site. Ser-13 contributes to the UTP binding site. Ser-14–Ile-19 provides a ligand contact to ATP. L-glutamine is bound at residue Tyr-54. ATP is bound at residue Asp-71. 2 residues coordinate Mg(2+): Asp-71 and Glu-141. CTP is bound by residues Asp-148–Glu-150, Lys-188–Gln-193, and Lys-224. UTP contacts are provided by residues Lys-188–Gln-193 and Lys-224. The region spanning Arg-292–Lys-532 is the Glutamine amidotransferase type-1 domain. Gly-354 provides a ligand contact to L-glutamine. The active-site Nucleophile; for glutamine hydrolysis is Cys-381. Residues Leu-382–Gln-385, Glu-405, and Arg-462 each bind L-glutamine. Residues His-507 and Glu-509 contribute to the active site.

This sequence belongs to the CTP synthase family. Homotetramer.

The catalysed reaction is UTP + L-glutamine + ATP + H2O = CTP + L-glutamate + ADP + phosphate + 2 H(+). It catalyses the reaction L-glutamine + H2O = L-glutamate + NH4(+). It carries out the reaction UTP + NH4(+) + ATP = CTP + ADP + phosphate + 2 H(+). Its pathway is pyrimidine metabolism; CTP biosynthesis via de novo pathway; CTP from UDP: step 2/2. With respect to regulation, allosterically activated by GTP, when glutamine is the substrate; GTP has no effect on the reaction when ammonia is the substrate. The allosteric effector GTP functions by stabilizing the protein conformation that binds the tetrahedral intermediate(s) formed during glutamine hydrolysis. Inhibited by the product CTP, via allosteric rather than competitive inhibition. Its function is as follows. Catalyzes the ATP-dependent amination of UTP to CTP with either L-glutamine or ammonia as the source of nitrogen. Regulates intracellular CTP levels through interactions with the four ribonucleotide triphosphates. The sequence is that of CTP synthase from Listeria monocytogenes serotype 4b (strain F2365).